The sequence spans 295 residues: Bifunctional protein FolD (295 aa).

NADP(+)-binding positions include glycine 166–serine 168, serine 191, and isoleucine 232.

This sequence belongs to the tetrahydrofolate dehydrogenase/cyclohydrolase family. Homodimer.

It carries out the reaction (6R)-5,10-methylene-5,6,7,8-tetrahydrofolate + NADP(+) = (6R)-5,10-methenyltetrahydrofolate + NADPH. The enzyme catalyses (6R)-5,10-methenyltetrahydrofolate + H2O = (6R)-10-formyltetrahydrofolate + H(+). The protein operates within one-carbon metabolism; tetrahydrofolate interconversion. Its function is as follows. Catalyzes the oxidation of 5,10-methylenetetrahydrofolate to 5,10-methenyltetrahydrofolate and then the hydrolysis of 5,10-methenyltetrahydrofolate to 10-formyltetrahydrofolate. The protein is Bifunctional protein FolD of Rhodopseudomonas palustris (strain BisA53).